A 177-amino-acid chain; its full sequence is Protein FATTY ACID EXPORT 4, chloroplastic (177 aa).

A chloroplast-targeting transit peptide spans 1-63 (MWSLALTLPS…AELSELAPVV (63 aa)). Transmembrane regions (helical) follow at residues 85 to 105 (KGSL…YFLT), 111 to 131 (RVLG…VFGF), and 140 to 160 (VPAG…VMAY).

The protein belongs to the TMEM14 family.

It is found in the plastid. It localises to the chloroplast membrane. In terms of biological role, may be involved in free fatty acids export from the plastids. The polypeptide is Protein FATTY ACID EXPORT 4, chloroplastic (Arabidopsis thaliana (Mouse-ear cress)).